We begin with the raw amino-acid sequence, 388 residues long: Oxytocin receptor (388 aa).

The tract at residues 1-32 (MEGTPAANWSVELDLGSGVPPGEEGNRTAGPP) is disordered. Over 1 to 38 (MEGTPAANWSVELDLGSGVPPGEEGNRTAGPPQRNEAL) the chain is Extracellular. Residues Asn-8 and Asn-26 are each glycosylated (N-linked (GlcNAc...) asparagine). A helical transmembrane segment spans residues 39-63 (ARVEVAVLCLILFLALSGNACVLLA). Over 64-74 (LRTTRHKHSRL) the chain is Cytoplasmic. A helical membrane pass occupies residues 75-97 (FFFMKHLSIADLVVAVFQVLPQL). The Extracellular segment spans residues 98–113 (LWDITFRFYGPDLLCR). Cys-112 and Cys-187 are joined by a disulfide. The helical transmembrane segment at 114-135 (LVKYLQVVGMFASTYLLLLMSL) threads the bilayer. Residues 136–154 (DRCLAICQPLRSLRRRTDR) lie on the Cytoplasmic side of the membrane. A helical membrane pass occupies residues 155-175 (LAVLGTWLGCLVASAPQVHIF). At 176–202 (SLREVADGVFDCWAVFIQPWGPKAYVT) the chain is on the extracellular side. Residues 203 to 225 (WITLAVYIVPVIVLAACYGLISF) traverse the membrane as a helical segment. The Cytoplasmic portion of the chain corresponds to 226–274 (KIWQNLRLKTAAAAAAAEGNDAAGGAGRAALARVSSVKLISKAKIRTVK). A helical membrane pass occupies residues 275–293 (MTFIIVLAFIVCWTPFFFV). Topologically, residues 294-308 (QMWSVWDVNAPKEAS) are extracellular. The helical transmembrane segment at 309–331 (AFIIAMLLASLNSCCNPWIYMLF) threads the bilayer. The Cytoplasmic portion of the chain corresponds to 332–388 (TGHLFHELVQRFFCCSARYLKGSRPGETSVSKKSNSSTFVLSRRSSSQRSCSQPSSA). Residues 354–388 (SRPGETSVSKKSNSSTFVLSRRSSSQRSCSQPSSA) form a disordered region. Ser-365 and Ser-367 each carry phosphoserine. A compositionally biased stretch (low complexity) spans 365-388 (SNSSTFVLSRRSSSQRSCSQPSSA).

Belongs to the G-protein coupled receptor 1 family. Vasopressin/oxytocin receptor subfamily.

Its subcellular location is the cell membrane. Functionally, receptor for oxytocin. The activity of this receptor is mediated by G proteins which activate a phosphatidylinositol-calcium second messenger system. This chain is Oxytocin receptor (Oxtr), found in Rattus norvegicus (Rat).